A 342-amino-acid polypeptide reads, in one-letter code: N-acetyl-gamma-glutamyl-phosphate reductase (342 aa).

Residue C149 is part of the active site.

The protein belongs to the NAGSA dehydrogenase family. Type 1 subfamily.

The protein localises to the cytoplasm. The catalysed reaction is N-acetyl-L-glutamate 5-semialdehyde + phosphate + NADP(+) = N-acetyl-L-glutamyl 5-phosphate + NADPH + H(+). The protein operates within amino-acid biosynthesis; L-arginine biosynthesis; N(2)-acetyl-L-ornithine from L-glutamate: step 3/4. Functionally, catalyzes the NADPH-dependent reduction of N-acetyl-5-glutamyl phosphate to yield N-acetyl-L-glutamate 5-semialdehyde. This chain is N-acetyl-gamma-glutamyl-phosphate reductase, found in Aromatoleum aromaticum (strain DSM 19018 / LMG 30748 / EbN1) (Azoarcus sp. (strain EbN1)).